A 736-amino-acid polypeptide reads, in one-letter code: Sulfate transporter (736 aa).

The tract at residues 1–28 is disordered; it reads MSSESKEPHVLSPKDSFEGNDRYSPPSR. S12 and S16 each carry phosphoserine. Transmembrane regions (helical) follow at residues 114–134 and 139–159; these read VMSGLIVGILLVPQSIAYSLL and PIYGLYTSFFASLIYFLLGTS. N-linked (GlcNAc...) asparagine glycans are attached at residues N201 and N207. A run of 6 helical transmembrane segments spans residues 229-249, 257-277, 380-400, 422-442, 457-477, and 526-546; these read FLAGIYQVAMGFFQVGFVSVY, GFVTGASFTILTSQAKYLLGL, LIPSVAVDAIAISIIGFAITV, AIGFCNIIPSFFHCFTTSAAL, LSGVMTALVLLLVLLVIAPLF, and LISTELGLLIGVCFSMFCVIL. The STAS domain occupies 570–721; it reads AYKNLQARPG…YSVYEAMAFA (152 aa).

This sequence belongs to the SLC26A/SulP transporter (TC 2.A.53) family. N-glycosylated.

The protein resides in the cell membrane. The protein localises to the apical cell membrane. The enzyme catalyses oxalate(in) + sulfate(out) = oxalate(out) + sulfate(in). It carries out the reaction sulfate(out) + 2 chloride(in) = sulfate(in) + 2 chloride(out). The catalysed reaction is oxalate(out) + 2 chloride(in) = oxalate(in) + 2 chloride(out). It catalyses the reaction bromide(in) + chloride(out) = bromide(out) + chloride(in). The enzyme catalyses nitrate(in) + chloride(out) = nitrate(out) + chloride(in). It carries out the reaction iodide(in) + chloride(out) = iodide(out) + chloride(in). Its function is as follows. Sulfate transporter which mediates sulfate uptake into chondrocytes in order to maintain adequate sulfation of proteoglycans which is needed for cartilage development. Mediates electroneutral anion exchange of sulfate ions for oxalate ions, sulfate and oxalate ions for chloride and/or hydroxyl ions and chloride ions for bromide, iodide and nitrate ions. The coupling of sulfate transport to both hydroxyl and chloride ions likely serves to ensure transport at both acidic pH when most sulfate uptake is mediated by sulfate-hydroxide exchange and alkaline pH when most sulfate uptake is mediated by sulfate-chloride exchange. Essential for chondrocyte proliferation, differentiation and cell size expansion. The chain is Sulfate transporter (SLC26A2) from Equus caballus (Horse).